Here is a 498-residue protein sequence, read N- to C-terminus: ATP synthase subunit beta, chloroplastic (498 aa).

172–179 (GGAGVGKT) contributes to the ATP binding site.

Belongs to the ATPase alpha/beta chains family. As to quaternary structure, F-type ATPases have 2 components, CF(1) - the catalytic core - and CF(0) - the membrane proton channel. CF(1) has five subunits: alpha(3), beta(3), gamma(1), delta(1), epsilon(1). CF(0) has four main subunits: a(1), b(1), b'(1) and c(9-12).

Its subcellular location is the plastid. The protein localises to the chloroplast thylakoid membrane. It catalyses the reaction ATP + H2O + 4 H(+)(in) = ADP + phosphate + 5 H(+)(out). Produces ATP from ADP in the presence of a proton gradient across the membrane. The catalytic sites are hosted primarily by the beta subunits. The sequence is that of ATP synthase subunit beta, chloroplastic from Salacca zalacca (Snake palm).